Consider the following 153-residue polypeptide: Late embryogenesis abundant protein B19.4 (153 aa).

Residues 1 to 153 are disordered; it reads MASGQQERSE…IDESKFKTKS (153 aa). 3 stretches are compositionally biased toward basic and acidic residues: residues 7–19, 32–122, and 133–153; these read ERSELDRMAREGE, EAQE…EMGR, and GGERAAREGIDIDESKFKTKS. Tandem repeats lie at residues 43–62, 63–82, 83–102, and 103–122. Positions 43-122 are 4 X 20 AA tandem repeats; that stretch reads RGGQTRKEQL…GEEGYREMGR (80 aa).

Belongs to the small hydrophilic plant seed protein family.

In terms of biological role, lea proteins are late embryonic proteins abundant in higher plant seed embryos. This Hordeum vulgare (Barley) protein is Late embryogenesis abundant protein B19.4 (B19.4).